Reading from the N-terminus, the 406-residue chain is Na(+)/H(+) antiporter NhaA (406 aa).

The next 12 helical transmembrane spans lie at 29 to 49 (FAGILLIIAFTLAIIVSNNIF), 75 to 95 (FIELVNDGLMTFFFLLIGLEM), 111 to 131 (ILPAVAALGGVVVPVLIYMFF), 141 to 161 (GWAIPIATDTAFVLGILSFFS), 170 to 190 (AFIIGFSLIDDAFALIILALF), 195 to 215 (INTPALLISSVIIFILFILNY), 220 to 240 (QLFYYIIVGLLLWISMVESGI), 242 to 262 (GTLCGAIIALFIPVNIKGEFN), 278 to 298 (YFILPLFVFMNSGILLEYFAF), 306 to 326 (ILALIYGIIFGLFVGKQLGIM), 349 to 369 (FYSIAILGGIGFTLSLFIGSI), and 382 to 402 (AAVIIGSLISALFGVAVLKYC).

The protein belongs to the NhaA Na(+)/H(+) (TC 2.A.33) antiporter family.

It localises to the cell inner membrane. The enzyme catalyses Na(+)(in) + 2 H(+)(out) = Na(+)(out) + 2 H(+)(in). Na(+)/H(+) antiporter that extrudes sodium in exchange for external protons. This Rickettsia massiliae (strain Mtu5) protein is Na(+)/H(+) antiporter NhaA.